A 122-amino-acid polypeptide reads, in one-letter code: uncharacterized protein (122 aa).

Residues 1–15 are compositionally biased toward basic and acidic residues; it reads MAEPGGRGDYRKDGR. A disordered region spans residues 1 to 49; it reads MAEPGGRGDYRKDGRLPSLSRSPLSTTLGTSPACGLEIPPTSGARPDGS. Positions 16-32 are enriched in low complexity; sequence LPSLSRSPLSTTLGTSP.

This is an uncharacterized protein from Homo sapiens (Human).